A 245-amino-acid chain; its full sequence is tRNA (guanine-N(1)-)-methyltransferase (245 aa).

Residues G111 and 131–136 (IGDYVL) each bind S-adenosyl-L-methionine.

Belongs to the RNA methyltransferase TrmD family. In terms of assembly, homodimer.

It localises to the cytoplasm. The catalysed reaction is guanosine(37) in tRNA + S-adenosyl-L-methionine = N(1)-methylguanosine(37) in tRNA + S-adenosyl-L-homocysteine + H(+). Its function is as follows. Specifically methylates guanosine-37 in various tRNAs. This Caldicellulosiruptor saccharolyticus (strain ATCC 43494 / DSM 8903 / Tp8T 6331) protein is tRNA (guanine-N(1)-)-methyltransferase.